A 300-amino-acid chain; its full sequence is Bifunctional protein FolD (300 aa).

Residues 172-174 (GRS), Ser-206, and Ile-247 contribute to the NADP(+) site.

It belongs to the tetrahydrofolate dehydrogenase/cyclohydrolase family. In terms of assembly, homodimer.

It catalyses the reaction (6R)-5,10-methylene-5,6,7,8-tetrahydrofolate + NADP(+) = (6R)-5,10-methenyltetrahydrofolate + NADPH. The enzyme catalyses (6R)-5,10-methenyltetrahydrofolate + H2O = (6R)-10-formyltetrahydrofolate + H(+). It participates in one-carbon metabolism; tetrahydrofolate interconversion. Its function is as follows. Catalyzes the oxidation of 5,10-methylenetetrahydrofolate to 5,10-methenyltetrahydrofolate and then the hydrolysis of 5,10-methenyltetrahydrofolate to 10-formyltetrahydrofolate. In Rhodopirellula baltica (strain DSM 10527 / NCIMB 13988 / SH1), this protein is Bifunctional protein FolD.